A 352-amino-acid polypeptide reads, in one-letter code: Divinyl chlorophyll a/b light-harvesting protein PcbA (352 aa).

6 consecutive transmembrane segments (helical) span residues 27–47, 90–110, 142–162, 203–223, 243–263, and 306–326; these read FIAAHVAHAGLIVFWAGAFTL, VLAIAIVHLVSSMVLAAGGLL, FILGHHLIILGFAVILLVEWA, VMGGHAFLAFVLITGGAWHIA, AVLSWSLAGIGWMAIIAAFWS, and LANVHYYFGFFFIQGHLWHAL.

The protein belongs to the PsbB/PsbC family. IsiA/Pcb subfamily. As to quaternary structure, the antenna complex consists of divinyl chlorophylls (a and b) and divinyl chlorophyll a/b binding proteins and binds less divinyl chlorophyll b than does low-light-adapted Prochlorococcus. Also forms complexes with PSII, consisting of a PSII dimer and 4 or 8 PcbA subunits. These complexes are also found under conditions of iron-starvation. It depends on divinyl chlorophyll a as a cofactor. Divinyl chlorophyll b is required as a cofactor.

The protein localises to the cellular thylakoid membrane. The antenna complex functions as a light receptor, it captures and delivers excitation energy to photosystem II and possibly to photosystem I. The Prochlorales pcb genes are not related to higher plant LHCs. The polypeptide is Divinyl chlorophyll a/b light-harvesting protein PcbA (pcbA) (Prochlorococcus marinus subsp. pastoris (strain CCMP1986 / NIES-2087 / MED4)).